We begin with the raw amino-acid sequence, 48 residues long: Delta-stichotoxin-She1a (48 aa).

Intrachain disulfides connect Cys-3–Cys-43, Cys-5–Cys-33, and Cys-26–Cys-44.

The protein belongs to the sea anemone sodium channel inhibitory toxin family. Type II subfamily.

Its subcellular location is the secreted. The protein resides in the nematocyst. In terms of biological role, binds specifically to voltage-gated sodium channels (Nav), thereby delaying their inactivation during signal transduction. Is highly toxic to crabs (by intrahemocoelic injection), but without effect upon mice (by intraperitoneal injection). The chain is Delta-stichotoxin-She1a from Stichodactyla helianthus (Sun anemone).